Consider the following 420-residue polypeptide: Acyl-coenzyme A amino acid N-acyltransferase 2 (420 aa).

Residues Ser-235, Asp-329, and His-363 each act as charge relay system in the active site. A Microbody targeting signal motif is present at residues 418–420; sequence SKL.

The protein belongs to the C/M/P thioester hydrolase family.

It localises to the peroxisome. Functionally, acyltransferase which efficiently conjugates very long-chain and long-chain fatty acids to taurine. Shows no conjugation activity in the presence of glycine. In Mus musculus (Mouse), this protein is Acyl-coenzyme A amino acid N-acyltransferase 2.